Consider the following 409-residue polypeptide: Arginine deiminase (409 aa).

Cys-398 functions as the Amidino-cysteine intermediate in the catalytic mechanism.

It belongs to the arginine deiminase family.

It is found in the cytoplasm. It carries out the reaction L-arginine + H2O = L-citrulline + NH4(+). It functions in the pathway amino-acid degradation; L-arginine degradation via ADI pathway; carbamoyl phosphate from L-arginine: step 1/2. This Metamycoplasma arthritidis (strain 158L3-1) (Mycoplasma arthritidis) protein is Arginine deiminase.